A 295-amino-acid polypeptide reads, in one-letter code: Glycine N-acyltransferase-like protein Keg1 (295 aa).

N6-acetyllysine; alternate is present on K41. N6-succinyllysine; alternate is present on K41. K43 carries the post-translational modification N6-acetyllysine. The residue at position 48 (K48) is an N6-acetyllysine; alternate. K48 is subject to N6-succinyllysine; alternate. 2 positions are modified to N6-acetyllysine: K80 and K83. N6-acetyllysine; alternate occurs at positions 124, 128, and 140. Residues K124, K128, and K140 each carry the N6-succinyllysine; alternate modification. At K150 the chain carries N6-acetyllysine. K255 is modified (N6-acetyllysine; alternate). N6-succinyllysine; alternate is present on K255.

Belongs to the glycine N-acyltransferase family. In terms of assembly, binds to microtubules.

The protein resides in the cytoplasm. Its subcellular location is the cytoskeleton. It localises to the microtubule organizing center. The protein localises to the centrosome. The enzyme catalyses an acyl-CoA + glycine = an N-acylglycine + CoA + H(+). Acyltransferase which transfers the acyl group to the N-terminus of glycine. Can conjugate a multitude of substrates to form a variety of N-acylglycines. This chain is Glycine N-acyltransferase-like protein Keg1 (Keg1), found in Mus musculus (Mouse).